Consider the following 203-residue polypeptide: MQDRFLKENTEIINLSSSIHPNRDSYLDSQSDPLNQNLYNIETENVKDLNIEDVDYYEKLQNFKIVDENIDPGLRTYSKRSVGVNNTFQNPCNRKIEGYIKEIERLSNSNKNLQAAVLQMAVSDTDDPRLKEEYKQTEKELLREISGNHKSKILKLEEELNDLKHSMKEMQLYMTKIIDKAMNNASLENLFSLDENNTKIHDK.

The stretch at 92–177 (CNRKIEGYIK…KEMQLYMTKI (86 aa)) forms a coiled coil.

The protein localises to the cytoplasm. In terms of biological role, has a role in meiosis and sporulation. In Schizosaccharomyces pombe (strain 972 / ATCC 24843) (Fission yeast), this protein is Meiotically up-regulated protein PB17E12.09.